We begin with the raw amino-acid sequence, 492 residues long: Ammonium transporter MEP1 (492 aa).

The Extracellular portion of the chain corresponds to 1–18 (MESRTTGPLTTETYDGPT). Residues 19–39 (VAFMILGAALVFFMVPGLGFL) traverse the membrane as a helical segment. Residues 40–49 (YSGLARRKSA) lie on the Cytoplasmic side of the membrane. A helical transmembrane segment spans residues 50–70 (LALIWVVLMATLVGILQWYFW). Residues 71–109 (GYSLAFSKSAPNNKFIGNLDSFGFRNVYGKKFDEDAYPE) lie on the Extracellular side of the membrane. Residues 110-130 (LAYATFQMMFSCVNLSIIAGA) form a helical membrane-spanning segment. Residues 131–140 (TAERGRLLPH) lie on the Cytoplasmic side of the membrane. The chain crosses the membrane as a helical span at residues 141-161 (MVFLFILATIGYCPVTYWIWS). Over 162–174 (PGGWAYQWGVLDW) the chain is Extracellular. The chain crosses the membrane as a helical span at residues 175–195 (AGGGNIEILSAVSGFVYSWFL). Topologically, residues 196 to 210 (GKRNEKLLINFRPHN) are cytoplasmic. The chain crosses the membrane as a helical span at residues 211–231 (VSLVTLGTSILWFGWLLFNSA). The Extracellular portion of the chain corresponds to 232-240 (SSLSPNLRS). Residues 241–261 (VYAFMNTCLSAITGGMTWCLL) form a helical membrane-spanning segment. Residues 262–268 (DYRSEKK) lie on the Cytoplasmic side of the membrane. Residues 269–289 (WSTVGLCSGIISGLVAATPSS) form a helical membrane-spanning segment. Position 290 (Gly-290) is a topological domain, extracellular. Residues 291-311 (CITLYGSLIQGIVAGVVCNFA) form a helical membrane-spanning segment. The Cytoplasmic portion of the chain corresponds to 312 to 331 (TKLKYYAKVDDAMDILAEHG). The helical transmembrane segment at 332–352 (VAGVIGLIFNALFGADWVIGM) threads the bilayer. Over 353–373 (DGTTEHEGGWVTHNYKQMYKQ) the chain is Extracellular. A helical transmembrane segment spans residues 374–394 (IAYIAASIGYTAAVTAIICFV). The Cytoplasmic portion of the chain corresponds to 395–492 (LGYIPGMRLR…PIHQEDPANR (98 aa)). Phosphoserine is present on residues Ser-442 and Ser-445. The disordered stretch occupies residues 455–492 (HLAAERSSSGTNSSSDGNGEMIQSEKILPIHQEDPANR). Residues 461 to 473 (SSSGTNSSSDGNG) show a composition bias toward low complexity.

It belongs to the ammonia transporter channel (TC 1.A.11.2) family.

Its subcellular location is the membrane. Transporter for ammonium (both charged and uncharged NH3 and NH4) to use as a nitrogen source. Can also transport methylamine. The affinity of MEP1 is about twenty times lower than that of MEP2. MEP3 has the lowest affinity. This Saccharomyces cerevisiae (strain ATCC 204508 / S288c) (Baker's yeast) protein is Ammonium transporter MEP1 (MEP1).